Consider the following 100-residue polypeptide: MGALTKAEMAERLYEELGLNKREAKELVELFFEEIRQALELNEQVKLSGFGNFDLRDKRQRPGRNPKTGEEIPITARRVVTFRPGQKLKARVEAYAGTKS.

This sequence belongs to the bacterial histone-like protein family. Heterodimer of an alpha and a beta chain.

This protein is one of the two subunits of integration host factor, a specific DNA-binding protein that functions in genetic recombination as well as in transcriptional and translational control. The sequence is that of Integration host factor subunit alpha from Ectopseudomonas mendocina (strain ymp) (Pseudomonas mendocina).